Here is a 492-residue protein sequence, read N- to C-terminus: Endoglucanase 15 (492 aa).

A signal peptide spans 1-30; it reads MSCISSQCFITIKSICIVLLLSITCGAVSA. Residue Asp86 is the Nucleophile of the active site. Catalysis depends on residues His414, Asp466, and Glu475.

This sequence belongs to the glycosyl hydrolase 9 (cellulase E) family.

Its subcellular location is the secreted. It catalyses the reaction Endohydrolysis of (1-&gt;4)-beta-D-glucosidic linkages in cellulose, lichenin and cereal beta-D-glucans.. This chain is Endoglucanase 15, found in Arabidopsis thaliana (Mouse-ear cress).